Consider the following 186-residue polypeptide: Casparian strip membrane protein 5 (186 aa).

The Cytoplasmic portion of the chain corresponds to 1–23 (MEHGEISSKAPLVAPVAAGVNRA). A helical transmembrane segment spans residues 24-44 (VAVVDTFLRFIAIIGTIGSAI). Residues 45–73 (AMGTTNETLPFFTQFIQFEAKYSDLPSFT) lie on the Extracellular side of the membrane. Asn50 carries N-linked (GlcNAc...) asparagine glycosylation. Residues 74-94 (FFVAANAVVCTYLVLSIPLSI) traverse the membrane as a helical segment. At 95-106 (VHILRPRARYSR) the chain is on the cytoplasmic side. A helical membrane pass occupies residues 107–127 (LFLVFFDTAMLALLTAGASAA). Topologically, residues 128–160 (AAIVYLAHKGNVRANWFSICQQFDSFCERISGS) are extracellular. Residues 161-181 (LIGSFAAMVLLVVLITLSAFA) form a helical membrane-spanning segment. The Cytoplasmic segment spans residues 182–186 (LARRH).

Belongs to the Casparian strip membrane proteins (CASP) family. Homodimer and heterodimers.

It is found in the cell membrane. Regulates membrane-cell wall junctions and localized cell wall deposition. Required for establishment of the Casparian strip membrane domain (CSD) and the subsequent formation of Casparian strips, a cell wall modification of the root endodermis that determines an apoplastic barrier between the intraorganismal apoplasm and the extraorganismal apoplasm and prevents lateral diffusion. This is Casparian strip membrane protein 5 from Oryza sativa subsp. japonica (Rice).